The chain runs to 681 residues: Cobalamin-dependent radical SAM methyltransferase TokK (681 aa).

Residues 1–144 (MSAELASRGR…ATRLSDHPDY (144 aa)) form the B12-binding domain. The cob(II)alamin site is built by asparagine 18, serine 72, tyrosine 74, valine 75, histidine 103, glycine 126, and glutamate 127. A Radical SAM core domain is found at 192-417 (RGLRFYALWE…RMYVERPGTP (226 aa)). Cysteine 206 and cysteine 210 together coordinate [4Fe-4S] cluster. 5'-deoxyadenosine is bound at residue phenylalanine 212. Cysteine 213 lines the [4Fe-4S] cluster pocket. Cob(II)alamin-binding residues include aspartate 214 and cysteine 249. 5'-deoxyadenosine-binding residues include glutamine 312, glutamate 349, and glycine 384.

The protein belongs to the methyltransferase superfamily. [4Fe-4S] cluster serves as cofactor. It depends on cob(II)alamin as a cofactor.

The protein operates within antibiotic biosynthesis. Methyltransferase involved in the biosynthesis of the beta-lactam carbapenem antibiotic asparenomycin. Catalyzes three consecutive S-adenosyl-L-methionine-dependent methylations to build out the C6-isopropyl side chain in a stereocontrolled manner. The protein is Cobalamin-dependent radical SAM methyltransferase TokK of Streptomyces tokunonensis.